The chain runs to 179 residues: Large ribosomal subunit protein uL5 (179 aa).

This sequence belongs to the universal ribosomal protein uL5 family. As to quaternary structure, part of the 50S ribosomal subunit; part of the 5S rRNA/L5/L18/L25 subcomplex. Contacts the 5S rRNA and the P site tRNA. Forms a bridge to the 30S subunit in the 70S ribosome.

This is one of the proteins that bind and probably mediate the attachment of the 5S RNA into the large ribosomal subunit, where it forms part of the central protuberance. In the 70S ribosome it contacts protein S13 of the 30S subunit (bridge B1b), connecting the 2 subunits; this bridge is implicated in subunit movement. Contacts the P site tRNA; the 5S rRNA and some of its associated proteins might help stabilize positioning of ribosome-bound tRNAs. The protein is Large ribosomal subunit protein uL5 of Aromatoleum aromaticum (strain DSM 19018 / LMG 30748 / EbN1) (Azoarcus sp. (strain EbN1)).